The sequence spans 634 residues: Probable potassium transport system protein Kup (634 aa).

A run of 12 helical transmembrane segments spans residues 19–39 (AIGL…TSPL), 62–82 (VLSL…VIFV), 113–133 (FVVV…MITP), 150–170 (GLEH…FLIQ), 177–197 (IGIL…ALGV), 225–245 (IGVA…ALYA), 259–279 (WFLL…ATIL), 291–311 (LLAP…ATVI), 349–369 (IYIG…VLGF), 379–399 (YGVA…VVIW), 406–426 (LWLG…FFAA), and 431–451 (VIQG…LMST).

This sequence belongs to the HAK/KUP transporter (TC 2.A.72) family.

It localises to the cell inner membrane. The enzyme catalyses K(+)(in) + H(+)(in) = K(+)(out) + H(+)(out). Functionally, transport of potassium into the cell. Likely operates as a K(+):H(+) symporter. The sequence is that of Probable potassium transport system protein Kup from Pseudomonas aeruginosa (strain LESB58).